The following is a 118-amino-acid chain: Crustacean hyperglycemic hormones 2 (118 aa).

The signal sequence occupies residues 1–22; the sequence is MTAFRLVAVALVVVVACSTTWA. Intrachain disulfides connect Cys-51–Cys-87, Cys-67–Cys-83, and Cys-70–Cys-96. Residue Val-116 is modified to Valine amide.

This sequence belongs to the arthropod CHH/MIH/GIH/VIH hormone family.

It localises to the secreted. Its function is as follows. Hormone found in the sinus gland of isopods and decapods which controls the blood sugar level. Has a secretagogue action over the amylase released from the midgut gland. May act as a stress hormone and may be involved in the control of molting and reproduction. This is Crustacean hyperglycemic hormones 2 (CHH2) from Penaeus monodon (Giant tiger prawn).